The sequence spans 117 residues: MACSAMTKLALVVALCMVVSVPIAQALTCGQVSSNLAPCIAYVRGGGAVPPACCNGIRNINNLAKTTADRQTACNCLKQLSASVPGVNANNAAALPGKCGVNVPYKISPSTNCATVK.

Positions 1 to 26 (MACSAMTKLALVVALCMVVSVPIAQA) are cleaved as a signal peptide. 4 cysteine pairs are disulfide-bonded: Cys29–Cys76, Cys39–Cys53, Cys54–Cys99, and Cys74–Cys113.

The protein belongs to the plant LTP family.

Plant non-specific lipid-transfer proteins transfer phospholipids as well as galactolipids across membranes. May play a role in wax or cutin deposition in the cell walls of expanding epidermal cells and certain secretory tissues. In Prunus avium (Cherry), this protein is Non-specific lipid-transfer protein.